Reading from the N-terminus, the 395-residue chain is PVGETTLGRISNVLGEPVDNPGPVQSNTIFPIHRSAPAFTQLDTKLSIFETGIKVADLLAPYRRGGKIGLFGGAGVGKTVLITELINNIAKAHGGVSVSGGVGERTREGNDLYMEMKESKVINEQNISESKVALVYGQMNEPPGARMRVGSTASTMAEYFRDVNKQDVLLFIDNILRFVQAGSEVSALLGRMPPAVGYQPTLGTEMGSLQERITSTKEGSTTSIQAVYVPADDLTDPAPATTSAHLDATTVLSRGLAAKGIYPAVDPLDSTSTMSQPWIVGEEHYETAQGVKQTLQRYKELQDIIAILGLDELSEEDRLTVARARKIERFPSQPFFVAEVFTGSPGKYVSLPETIKGFQMILPGELDSLPEQAFYLVGNVDEATAKAAALQVEGQ.

An ATP-binding site is contributed by 72 to 79 (GGAGVGKT).

This sequence belongs to the ATPase alpha/beta chains family. As to quaternary structure, F-type ATPases have 2 components, CF(1) - the catalytic core - and CF(0) - the membrane proton channel. CF(1) has five subunits: alpha(3), beta(3), gamma(1), delta(1), epsilon(1). CF(0) has four main subunits: a(1), b(1), b'(1) and c(9-12).

The protein localises to the plastid. Its subcellular location is the chloroplast thylakoid membrane. The enzyme catalyses ATP + H2O + 4 H(+)(in) = ADP + phosphate + 5 H(+)(out). Functionally, produces ATP from ADP in the presence of a proton gradient across the membrane. The catalytic sites are hosted primarily by the beta subunits. The polypeptide is ATP synthase subunit beta, chloroplastic (Microlepia platyphylla (Plate fern)).